Consider the following 204-residue polypeptide: Ribosomal RNA small subunit methyltransferase G (204 aa).

S-adenosyl-L-methionine is bound by residues glycine 73, phenylalanine 78, and arginine 139.

This sequence belongs to the methyltransferase superfamily. RNA methyltransferase RsmG family.

The protein resides in the cytoplasm. It catalyses the reaction guanosine(527) in 16S rRNA + S-adenosyl-L-methionine = N(7)-methylguanosine(527) in 16S rRNA + S-adenosyl-L-homocysteine. Functionally, specifically methylates the N7 position of guanine in position 527 of 16S rRNA. This chain is Ribosomal RNA small subunit methyltransferase G, found in Coxiella burnetii (strain Dugway 5J108-111).